The following is a 449-amino-acid chain: Uridine-cytidine kinase C (449 aa).

58–65 provides a ligand contact to ATP; that stretch reads GPSGAGKT. The CYTH domain maps to 235-401; sequence NPIYILKSVK…QKSYIELYQD (167 aa).

Belongs to the uridine kinase family.

It catalyses the reaction uridine + ATP = UMP + ADP + H(+). The enzyme catalyses cytidine + ATP = CMP + ADP + H(+). The protein operates within pyrimidine metabolism; CTP biosynthesis via salvage pathway; CTP from cytidine: step 1/3. It functions in the pathway pyrimidine metabolism; UMP biosynthesis via salvage pathway; UMP from uridine: step 1/1. In terms of biological role, catalyzes the conversion of uridine into uridine monophosphate and cytidine into cytidine monophosphate in the pyrimidine salvage pathway. This Dictyostelium discoideum (Social amoeba) protein is Uridine-cytidine kinase C (udkC).